Here is a 357-residue protein sequence, read N- to C-terminus: Dual-specificity RNA methyltransferase RlmN (357 aa).

The active-site Proton acceptor is glutamate 89. The 232-residue stretch at 109-340 (EREKYTVCVS…CTIRESKALD (232 aa)) folds into the Radical SAM core domain. A disulfide bridge connects residues cysteine 116 and cysteine 345. Positions 123, 127, and 130 each coordinate [4Fe-4S] cluster. S-adenosyl-L-methionine is bound by residues 173 to 174 (GE), serine 203, 226 to 228 (SLH), and asparagine 302. The S-methylcysteine intermediate role is filled by cysteine 345.

It belongs to the radical SAM superfamily. RlmN family. The cofactor is [4Fe-4S] cluster.

The protein resides in the cytoplasm. It carries out the reaction adenosine(2503) in 23S rRNA + 2 reduced [2Fe-2S]-[ferredoxin] + 2 S-adenosyl-L-methionine = 2-methyladenosine(2503) in 23S rRNA + 5'-deoxyadenosine + L-methionine + 2 oxidized [2Fe-2S]-[ferredoxin] + S-adenosyl-L-homocysteine. The enzyme catalyses adenosine(37) in tRNA + 2 reduced [2Fe-2S]-[ferredoxin] + 2 S-adenosyl-L-methionine = 2-methyladenosine(37) in tRNA + 5'-deoxyadenosine + L-methionine + 2 oxidized [2Fe-2S]-[ferredoxin] + S-adenosyl-L-homocysteine. Specifically methylates position 2 of adenine 2503 in 23S rRNA and position 2 of adenine 37 in tRNAs. m2A2503 modification seems to play a crucial role in the proofreading step occurring at the peptidyl transferase center and thus would serve to optimize ribosomal fidelity. This chain is Dual-specificity RNA methyltransferase RlmN, found in Helicobacter pylori (strain ATCC 700392 / 26695) (Campylobacter pylori).